Here is a 194-residue protein sequence, read N- to C-terminus: uncharacterized protein (194 aa).

The HTH tetR-type domain maps to 2–62; sequence QGPRERMVVS…CEAVDYAGEH (61 aa). A DNA-binding region (H-T-H motif) is located at residues 25–44; the sequence is AISDVLQHSGAPRGSAYHYF.

This is an uncharacterized protein from Mycobacterium tuberculosis (strain CDC 1551 / Oshkosh).